The chain runs to 1363 residues: Kinesin-like protein kif7 (1363 aa).

Positions 15–347 (AVQVAVRVRP…LNYAKRARNI (333 aa)) constitute a Kinesin motor domain. 94 to 101 (GQTGSGKT) contacts ATP. Coiled coils occupy residues 358 to 385 (EPDRIEGLELQIKALRRALENRQRSETR) and 491 to 552 (EDWR…LLAQ). Over residues 603 to 622 (DSSSYSEQTQWDGTHGNTHC) the composition is skewed to polar residues. The segment at 603–642 (DSSSYSEQTQWDGTHGNTHCESSRKLNRDEDGHMQTTRDK) is disordered. Residues 623 to 640 (ESSRKLNRDEDGHMQTTR) show a composition bias toward basic and acidic residues. Coiled coils occupy residues 714–1068 (LLQA…AAIE) and 1116–1225 (DKVV…LREM). The interval 1314 to 1346 (IVQPGMNSTHWSGSTSLPVTRPRREPRRSSLNT) is disordered. Over residues 1318 to 1331 (GMNSTHWSGSTSLP) the composition is skewed to polar residues.

Belongs to the TRAFAC class myosin-kinesin ATPase superfamily. Kinesin family. KIF27 subfamily. Binds microtubules. Interacts with gli1 and sufu.

It is found in the cytoplasm. Its subcellular location is the cytoskeleton. The protein localises to the cell projection. The protein resides in the cilium. Acts downstream of smo as an intracellular repressor of hedgehog signaling pathway, mainly through the suppression of gli1 activity. This negative regulatory effect is enhanced in conjunction with the suppressor of fused (sufu) protein. Positively regulates gli2a activity by promoting its dissociation from sufu. Involved in the regulation of microtubular dynamics. The protein is Kinesin-like protein kif7 (kif7) of Danio rerio (Zebrafish).